The chain runs to 78 residues: Translation initiation factor IF-1 (78 aa).

The region spanning 2 to 78 is the S1-like domain; the sequence is SKNNLNETES…TRARITYRFK (77 aa).

The protein belongs to the IF-1 family. Component of the 30S ribosomal translation pre-initiation complex which assembles on the 30S ribosome in the order IF-2 and IF-3, IF-1 and N-formylmethionyl-tRNA(fMet); mRNA recruitment can occur at any time during PIC assembly.

Its subcellular location is the cytoplasm. In terms of biological role, one of the essential components for the initiation of protein synthesis. Stabilizes the binding of IF-2 and IF-3 on the 30S subunit to which N-formylmethionyl-tRNA(fMet) subsequently binds. Helps modulate mRNA selection, yielding the 30S pre-initiation complex (PIC). Upon addition of the 50S ribosomal subunit IF-1, IF-2 and IF-3 are released leaving the mature 70S translation initiation complex. The sequence is that of Translation initiation factor IF-1 from Onion yellows phytoplasma (strain OY-M).